A 361-amino-acid chain; its full sequence is G-protein coupled receptor 52 (361 aa).

Residues 1–44 (MNDSRWTEWRILNTSSGILNVSERHSCPLGFGHYSAVDVCIFET) are Extracellular-facing. N-linked (GlcNAc...) asparagine glycosylation is found at N2, N13, and N20. A helical transmembrane segment spans residues 45–65 (IVIVLLTFLIIAGNLTVIFVF). At 66–87 (HCAPLLHHYTTSYFIQTMAYAD) the chain is on the cytoplasmic side. The helical transmembrane segment at 88-108 (LFVGVSCLVPTLSLLHYSTGI) threads the bilayer. Residues 109–115 (HESLTCQ) lie on the Extracellular side of the membrane. A disulfide bond links C114 and C193. The helical transmembrane segment at 116–136 (VFGYIISVLKSVSMACLACIS) threads the bilayer. Topologically, residues 137–159 (VDRYLAITKPLSYNQLVTPCRLR) are cytoplasmic. The helical transmembrane segment at 160 to 180 (ICIILIWIYSCLIFLPSFFGW) threads the bilayer. At 181–200 (GKPGYHGDIFEWCATSWLTS) the chain is on the extracellular side. A helical membrane pass occupies residues 201–221 (AYFTGFIVCLLYAPAALVVCF). Residues 222–265 (TYFHIFKICRQHTKEINDRRARFPSHEAAASRDAGHSPDRRYAM) are Cytoplasmic-facing. The helical transmembrane segment at 266 to 286 (VLFRITSVFYMLWLPYIIYFL) threads the bilayer. Over 287–296 (LESSRVLDNP) the chain is Extracellular. Residues 297 to 317 (TLSFLTTWLAISNSFCNCVIY) form a helical membrane-spanning segment. Topologically, residues 318–361 (SLSNSVFRLGLRRLSETMCTSCMCVKDKEARDPKPRKRANSCSI) are cytoplasmic.

The protein belongs to the G-protein coupled receptor 1 family.

Its subcellular location is the cell membrane. Its function is as follows. G- protein coupled receptor activated by antipsychotics reserpine leading to an increase in intracellular cAMP and its internalization. May play a role in locomotor activity through modulation of dopamine, NMDA and ADORA2A-induced locomotor activity. These behavioral changes are accompanied by modulation of the dopamine receptor signaling pathway in striatum. Modulates HTT level via cAMP-dependent but PKA independent mechanisms throught activation of RAB39B that translocates HTT to the endoplasmic reticulum, thus avoiding proteasome degradation. The protein is G-protein coupled receptor 52 of Bos taurus (Bovine).